The following is a 275-amino-acid chain: NH(3)-dependent NAD(+) synthetase (275 aa).

ATP is bound at residue 46-53 (GISGGQDS). Mg(2+) is bound at residue D52. R140 contributes to the deamido-NAD(+) binding site. T160 is a binding site for ATP. E165 contacts Mg(2+). Residues K173 and D180 each contribute to the deamido-NAD(+) site. ATP is bound by residues K189 and T211. 260-261 (HK) serves as a coordination point for deamido-NAD(+).

This sequence belongs to the NAD synthetase family. In terms of assembly, homodimer.

It catalyses the reaction deamido-NAD(+) + NH4(+) + ATP = AMP + diphosphate + NAD(+) + H(+). It functions in the pathway cofactor biosynthesis; NAD(+) biosynthesis; NAD(+) from deamido-NAD(+) (ammonia route): step 1/1. In terms of biological role, catalyzes the ATP-dependent amidation of deamido-NAD to form NAD. Uses ammonia as a nitrogen source. This Shigella flexneri serotype 5b (strain 8401) protein is NH(3)-dependent NAD(+) synthetase.